Consider the following 288-residue polypeptide: 2-methoxy-6-polyprenyl-1,4-benzoquinol methylase, mitochondrial (288 aa).

The transit peptide at 1–27 directs the protein to the mitochondrion; that stretch reads MALRSVSRRLGSRILNQRSFVASLHSH. Residues threonine 94, aspartate 130, and 160–161 each bind S-adenosyl-L-methionine; that span reads DA.

It belongs to the class I-like SAM-binding methyltransferase superfamily. MenG/UbiE family. In terms of assembly, component of a multi-subunit COQ enzyme complex.

Its subcellular location is the mitochondrion inner membrane. The enzyme catalyses a 2-methoxy-6-(all-trans-polyprenyl)benzene-1,4-diol + S-adenosyl-L-methionine = a 5-methoxy-2-methyl-3-(all-trans-polyprenyl)benzene-1,4-diol + S-adenosyl-L-homocysteine + H(+). It functions in the pathway cofactor biosynthesis; ubiquinone biosynthesis. Its function is as follows. Methyltransferase required for the conversion of 2-polyprenyl-6-methoxy-1,4-benzoquinol (DDMQH2) to 2-polyprenyl-3-methyl-6-methoxy-1,4-benzoquinol (DMQH2). The sequence is that of 2-methoxy-6-polyprenyl-1,4-benzoquinol methylase, mitochondrial from Arabidopsis thaliana (Mouse-ear cress).